Reading from the N-terminus, the 153-residue chain is Transcriptional repressor NrdR (153 aa).

A zinc finger spans residues cysteine 3–cysteine 34. The ATP-cone domain occupies isoleucine 49–glutamine 139.

This sequence belongs to the NrdR family. Zn(2+) is required as a cofactor.

Negatively regulates transcription of bacterial ribonucleotide reductase nrd genes and operons by binding to NrdR-boxes. The sequence is that of Transcriptional repressor NrdR from Fervidobacterium nodosum (strain ATCC 35602 / DSM 5306 / Rt17-B1).